The chain runs to 206 residues: Bacterial microcompartment protein trimer-3 (206 aa).

2 BMC circularly permuted domains span residues Glu-2–Pro-104 and Arg-105–Gly-206. A Pore gating residues motif is present at residues Glu-67–Arg-68.

It belongs to the EutL/PduB family. Homotrimerizes to form a pseudohexamer. These stack, with the concave faces together, with the concave faces together, in purified bacterial microcompartments (BMC).

The protein resides in the bacterial microcompartment. Its function is as follows. A minor component of the bacterial microcompartment (BMC) shell. Expression of 5 proteins in E.coli (BMC-H (Hoch_5815), BMC-P (Hoch_5814), and 3 BMC-T (Hoch_5812, Hoch_5816, Hoch_3341)) forms 40 nm artificial BMCs with a molecular mass of 6.5 MDa. One of 2 stacked pseudohexamers in the BMC. There are 20 BMC-T pseudohexamers per BMC, composed of mixed BMC-T1, BMC-T2 and BMC-T3. The shell facets are 20-30 Angstroms thick, with 1 of the stacked BMC-T trimers protruding to the exterior. The stacked trimers may serve as conduits to allow metabolite flux across the protein shell, gated by Arg-68 which contacts Glu-67 in an adjacent subunit; they are flexible enough to play a role in accommodating variations in shell assembly. The chain is Bacterial microcompartment protein trimer-3 from Haliangium ochraceum (strain DSM 14365 / JCM 11303 / SMP-2).